A 1401-amino-acid chain; its full sequence is Uveal autoantigen with coiled-coil domains and ankyrin repeats protein (1401 aa).

ANK repeat units lie at residues 25 to 53, 54 to 83, 87 to 116, 120 to 149, 153 to 182, and 186 to 215; these read LMRAAERGDVEKVSSILAKKGVNPGKLDV, EGRSAFHVVASKGNLECLNAILIHGVDITT, AGRNALHLAAKYGHALCLQKLLQYNCPTEH, QGRTALHDAAMADCPSSIQLLCDHGASVNA, DGRTPLVLATQMCRPTICQLLIDRGADINS, and QNRTALMLGCEYGCKDAVEVLIKNGADVTL. At S265 the chain carries Phosphoserine. Coiled coils occupy residues 273–361, 423–827, and 856–1368; these read TKSN…SRFK, ENEI…EKIY, and ALSS…VIAI. K1020 is covalently cross-linked (Glycyl lysine isopeptide (Lys-Gly) (interchain with G-Cter in SUMO2)).

As to quaternary structure, component of the apoptosome complex, composed of APAF1, pro-caspase-9 and UACA. In the complex, it probably interacts directly with APAF1. Interacts with LGALS3. Interacts with ARF6 and ACTB. Interacts with RAB39A. As to expression, highly expressed in muscle and heart, moderately in liver, kidney and pancreas, and weakly in placenta and lung.

Its subcellular location is the nucleus. It localises to the cytoplasm. The protein resides in the cytoskeleton. Functionally, regulates APAF1 expression and plays an important role in the regulation of stress-induced apoptosis. Promotes apoptosis by regulating three pathways, apoptosome up-regulation, LGALS3/galectin-3 down-regulation and NF-kappa-B inactivation. Regulates the redistribution of APAF1 into the nucleus after proapoptotic stress. Down-regulates the expression of LGALS3 by inhibiting NFKB1. Its function is as follows. Modulates isoactin dynamics to regulate the morphological alterations required for cell growth and motility. Interaction with ARF6 may modulate cell shape and motility after injury. May be involved in multiple neurite formation. This chain is Uveal autoantigen with coiled-coil domains and ankyrin repeats protein (UACA), found in Bos taurus (Bovine).